Here is a 458-residue protein sequence, read N- to C-terminus: Morphogenetic regulator of filamentous growth protein 1 (458 aa).

Residues 401–458 (KKDSGSEPLHAKRRRNSGISPRTTTLGPNGNSNTSNEELPTSDVNDINKDMTKKKMKF) are disordered. Positions 417 to 445 (SGISPRTTTLGPNGNSNTSNEELPTSDVN) are enriched in polar residues. Basic and acidic residues predominate over residues 446 to 458 (DINKDMTKKKMKF).

It belongs to the MFG1 family. In terms of assembly, interacts with FLO8 and MSS11, both morphogenetic transcription factors binding directly to the FLO11 promoter.

The protein resides in the nucleus. Transcriptional regulator with a general role in all morphogenetically distinct forms of filamentous growth, namely haploid invasive growth, biofilm formation, and diploid pseudohyphal growth. May control FLO11 gene expression as part of a promoter-bound complex with FLO8 and MSS1. This chain is Morphogenetic regulator of filamentous growth protein 1 (MFG1), found in Saccharomyces cerevisiae (strain ATCC 204508 / S288c) (Baker's yeast).